A 444-amino-acid polypeptide reads, in one-letter code: Vacuolar protein sorting-associated protein 4B (444 aa).

Residues 4–82 (TSPNLQKAID…KEYLKNKEKK (79 aa)) form the MIT domain. Residues 19-82 (AQEDKAGNYE…KEYLKNKEKK (64 aa)) adopt a coiled-coil conformation. Over residues 78 to 88 (NKEKKAQKPVK) the composition is skewed to basic and acidic residues. A disordered region spans residues 78 to 117 (NKEKKAQKPVKEGQPSPADEKGNDSDGEGESDDPEKKKLQ). Residues serine 93, serine 102, and serine 108 each carry the phosphoserine modification. An ATP-binding site is contributed by 174–181 (GPPGTGKS). Serine 410 carries the post-translational modification Phosphoserine.

Belongs to the AAA ATPase family. Proposed to be monomeric or homodimeric in nucleotide-free form and to oligomerize upon binding to ATP to form two stacked hexameric or heptameric rings with a central pore through which ESCRT-III substrates are translocated in an ATP-dependent manner. In vitro, associates on the inside of a helical tubular structure formed by a CHMP2A-CHMP3 polymer. Interacts with CHMP1A, CHMP1B, CHMP2A, CHMP4B and CHMP6. Interacts with VPS4A; the interaction suggests a heteromeric assembly with VPS4A. Interacts with VTA1.

It is found in the late endosome membrane. The enzyme catalyses ATP + H2O = ADP + phosphate + H(+). Functionally, involved in late steps of the endosomal multivesicular bodies (MVB) pathway. Recognizes membrane-associated ESCRT-III assemblies and catalyzes their disassembly, possibly in combination with membrane fission. Redistributes the ESCRT-III components to the cytoplasm for further rounds of MVB sorting. MVBs contain intraluminal vesicles (ILVs) that are generated by invagination and scission from the limiting membrane of the endosome and mostly are delivered to lysosomes enabling degradation of membrane proteins, such as stimulated growth factor receptors, lysosomal enzymes and lipids. VPS4A/B are required for the exosomal release of SDCBP, CD63 and syndecan. (Microbial infection) In conjunction with the ESCRT machinery also appears to function in topologically equivalent membrane fission events, such as the terminal stages of cytokinesis and enveloped virus budding (lentiviruses). The protein is Vacuolar protein sorting-associated protein 4B (VPS4B) of Pongo abelii (Sumatran orangutan).